The chain runs to 257 residues: 5'-nucleotidase SurE (257 aa).

A divalent metal cation-binding residues include D8, D9, S39, and N87. A disordered region spans residues 234–257 (VSPLTAPHPTTGHEGLAGLAEKYQ).

It belongs to the SurE nucleotidase family. A divalent metal cation is required as a cofactor.

It localises to the cytoplasm. The enzyme catalyses a ribonucleoside 5'-phosphate + H2O = a ribonucleoside + phosphate. Its function is as follows. Nucleotidase that shows phosphatase activity on nucleoside 5'-monophosphates. In Natronomonas pharaonis (strain ATCC 35678 / DSM 2160 / CIP 103997 / JCM 8858 / NBRC 14720 / NCIMB 2260 / Gabara) (Halobacterium pharaonis), this protein is 5'-nucleotidase SurE.